Reading from the N-terminus, the 228-residue chain is Putative NAC domain-containing protein 61 (228 aa).

The region spanning 5 to 156 (LSVGFRFYPT…KSGSSRAFDR (152 aa)) is the NAC domain. 2 disordered regions span residues 77–96 (ARGG…ATGS) and 166–197 (RNLP…QVDL). The segment covering 80–89 (GRPSRTTGSG) has biased composition (low complexity). Polar residues predominate over residues 168–193 (LPSNGVETSSRATISTSPETSHSGGN).

The protein localises to the nucleus. The sequence is that of Putative NAC domain-containing protein 61 (NAC061) from Arabidopsis thaliana (Mouse-ear cress).